We begin with the raw amino-acid sequence, 414 residues long: Histidine--tRNA ligase (414 aa).

It belongs to the class-II aminoacyl-tRNA synthetase family. In terms of assembly, homodimer.

It is found in the cytoplasm. The enzyme catalyses tRNA(His) + L-histidine + ATP = L-histidyl-tRNA(His) + AMP + diphosphate + H(+). This Mycoplasma capricolum subsp. capricolum (strain California kid / ATCC 27343 / NCTC 10154) protein is Histidine--tRNA ligase.